The chain runs to 178 residues: Adenine phosphoribosyltransferase (178 aa).

The protein belongs to the purine/pyrimidine phosphoribosyltransferase family. In terms of assembly, homodimer.

Its subcellular location is the cytoplasm. The enzyme catalyses AMP + diphosphate = 5-phospho-alpha-D-ribose 1-diphosphate + adenine. It participates in purine metabolism; AMP biosynthesis via salvage pathway; AMP from adenine: step 1/1. Functionally, catalyzes a salvage reaction resulting in the formation of AMP, that is energically less costly than de novo synthesis. The sequence is that of Adenine phosphoribosyltransferase from Novosphingobium aromaticivorans (strain ATCC 700278 / DSM 12444 / CCUG 56034 / CIP 105152 / NBRC 16084 / F199).